Consider the following 471-residue polypeptide: Ribulose bisphosphate carboxylase large chain (471 aa).

Positions 115 and 165 each coordinate substrate. The active-site Proton acceptor is the Lys-167. Residue Lys-169 participates in substrate binding. 3 residues coordinate Mg(2+): Lys-193, Asp-195, and Glu-196. Residue Lys-193 is modified to N6-carboxylysine. The active-site Proton acceptor is His-286. The substrate site is built by Arg-287, His-319, and Ser-371.

Belongs to the RuBisCO large chain family. Type I subfamily. Heterohexadecamer of 8 large chains and 8 small chains. Mg(2+) serves as cofactor.

Its subcellular location is the carboxysome. It carries out the reaction 2 (2R)-3-phosphoglycerate + 2 H(+) = D-ribulose 1,5-bisphosphate + CO2 + H2O. The enzyme catalyses D-ribulose 1,5-bisphosphate + O2 = 2-phosphoglycolate + (2R)-3-phosphoglycerate + 2 H(+). RuBisCO catalyzes two reactions: the carboxylation of D-ribulose 1,5-bisphosphate, the primary event in carbon dioxide fixation, as well as the oxidative fragmentation of the pentose substrate in the photorespiration process. Both reactions occur simultaneously and in competition at the same active site. The sequence is that of Ribulose bisphosphate carboxylase large chain from Synechococcus sp. (strain CC9605).